Here is a 187-residue protein sequence, read N- to C-terminus: Protein McbG (187 aa).

The protein belongs to the pentapeptide repeat protein family.

In terms of biological role, together with proteins McbE and McbF this protein causes immunity to the peptide antibiotic microcin B17 (MccB17), which inhibits DNA replication in Enterobacteriaceae by induction of the SOS repair system. McbG alone can provide some protection. The polypeptide is Protein McbG (mcbG) (Escherichia coli).